The sequence spans 279 residues: Shikimate dehydrogenase (NADP(+)) (279 aa).

Shikimate-binding positions include 17–19 (SQS) and threonine 64. The active-site Proton acceptor is the lysine 68. Shikimate contacts are provided by asparagine 89 and aspartate 105. NADP(+) contacts are provided by residues 130 to 134 (GAGGA) and leucine 218. Tyrosine 220 serves as a coordination point for shikimate. NADP(+) is bound at residue glycine 242.

The protein belongs to the shikimate dehydrogenase family. As to quaternary structure, homodimer.

The enzyme catalyses shikimate + NADP(+) = 3-dehydroshikimate + NADPH + H(+). It functions in the pathway metabolic intermediate biosynthesis; chorismate biosynthesis; chorismate from D-erythrose 4-phosphate and phosphoenolpyruvate: step 4/7. Involved in the biosynthesis of the chorismate, which leads to the biosynthesis of aromatic amino acids. Catalyzes the reversible NADPH linked reduction of 3-dehydroshikimate (DHSA) to yield shikimate (SA). In Methylococcus capsulatus (strain ATCC 33009 / NCIMB 11132 / Bath), this protein is Shikimate dehydrogenase (NADP(+)).